Here is a 548-residue protein sequence, read N- to C-terminus: Zinc metalloproteinase (548 aa).

The first 28 residues, 1–28 (MKKYYAVTGIALAVGMLCTTQLAGATQA), serve as a signal peptide directing secretion. His-362 contacts Zn(2+). Glu-363 is an active-site residue. Residues His-366 and Glu-386 each coordinate Zn(2+). The segment at 440-459 (SNWKPTATNPNDNNDQGGVH) is disordered. Residues 442-459 (WKPTATNPNDNNDQGGVH) show a composition bias toward polar residues. Catalysis depends on His-459, which acts as the Proton donor.

Belongs to the peptidase M4 family. Ca(2+) serves as cofactor. It depends on Zn(2+) as a cofactor.

It is found in the secreted. The protein localises to the cell wall. Functionally, zinc metalloprotease with hemolytic properties. The polypeptide is Zinc metalloproteinase (hly) (Renibacterium salmoninarum).